A 497-amino-acid chain; its full sequence is Galactose/methyl galactoside import ATP-binding protein MglA 1 (497 aa).

2 consecutive ABC transporter domains span residues 6–243 (LEMR…VGRD) and 256–494 (GKVR…VMSM). Position 38–45 (38–45 (GENGAGKS)) interacts with ATP.

The protein belongs to the ABC transporter superfamily. Galactose/methyl galactoside importer (TC 3.A.1.2.3) family. In terms of assembly, the complex is composed of one ATP-binding protein (MglA), two transmembrane proteins (MglC) and a solute-binding protein (MglB).

The protein resides in the cell inner membrane. The enzyme catalyses D-galactose(out) + ATP + H2O = D-galactose(in) + ADP + phosphate + H(+). The catalysed reaction is methyl beta-D-galactoside(out) + ATP + H2O = methyl beta-D-galactoside(in) + ADP + phosphate + H(+). In terms of biological role, part of the ABC transporter complex MglABC involved in galactose/methyl galactoside import. Responsible for energy coupling to the transport system. The polypeptide is Galactose/methyl galactoside import ATP-binding protein MglA 1 (Photobacterium profundum (strain SS9)).